Consider the following 36-residue polypeptide: Photosystem II reaction center protein M (36 aa).

Residue Met1 is modified to Blocked amino end (Met). The Lumenal portion of the chain corresponds to 1–11 (MEVNQLGFIAT). A helical membrane pass occupies residues 12-27 (ALFVLVPSVFLIILYV). The Cytoplasmic segment spans residues 28 to 36 (QTESQQKSS).

This sequence belongs to the PsbM family. In terms of assembly, PSII is composed of 1 copy each of membrane proteins PsbA, PsbB, PsbC, PsbD, PsbE, PsbF, PsbH, PsbI, PsbJ, PsbK, PsbL, PsbM, PsbT, PsbX, PsbY, PsbZ, Psb30/Ycf12, peripheral proteins PsbO, CyanoQ (PsbQ), PsbU, PsbV, PsbU, PsbV and a large number of cofactors. It forms dimeric complexes. PSII binds multiple chlorophylls, carotenoids and specific lipids. is required as a cofactor.

Its subcellular location is the cellular thylakoid membrane. Functionally, one of the components of the core complex of photosystem II (PSII). PSII is a light-driven water:plastoquinone oxidoreductase that uses light energy to abstract electrons from H(2)O, generating O(2) and a proton gradient subsequently used for ATP formation. It consists of a core antenna complex that captures photons, and an electron transfer chain that converts photonic excitation into a charge separation. This subunit is found at the monomer-monomer interface. Probably involved in dimerization of PSII; at the monomer-monomer interface the only protein-protein contacts observed are between the 2 PsbM subunits. Lipids, chlorophylls and carotenoids contribute strongly to PSII dimerization. In Thermostichus vulcanus (Synechococcus vulcanus), this protein is Photosystem II reaction center protein M.